The chain runs to 110 residues: Large ribosomal subunit protein uL22 (110 aa).

The protein belongs to the universal ribosomal protein uL22 family. As to quaternary structure, part of the 50S ribosomal subunit.

In terms of biological role, this protein binds specifically to 23S rRNA; its binding is stimulated by other ribosomal proteins, e.g. L4, L17, and L20. It is important during the early stages of 50S assembly. It makes multiple contacts with different domains of the 23S rRNA in the assembled 50S subunit and ribosome. Its function is as follows. The globular domain of the protein is located near the polypeptide exit tunnel on the outside of the subunit, while an extended beta-hairpin is found that lines the wall of the exit tunnel in the center of the 70S ribosome. This chain is Large ribosomal subunit protein uL22, found in Photobacterium profundum (strain SS9).